The sequence spans 168 residues: MEMLKFGKFAALALAMAVAVGCSSKGGDASGEGANGGVDPNAGYGANSGAVDGSLSDEAALRAITTFYFEYDSSDLKPEAMRALDVHAKDLKGSGQRVVLEGHTDERGTREYNMALGERRAKAVQRYLVLQGVSPAQLELVSYGKERPVATGHDEQSWAQNRRVELKK.

A signal peptide spans 1 to 21; it reads MEMLKFGKFAALALAMAVAVG. Residue Cys-22 is the site of N-palmitoyl cysteine attachment. Cys-22 carries S-diacylglycerol cysteine lipidation. One can recognise an OmpA-like domain in the interval 56-168; sequence SDEAALRAIT…AQNRRVELKK (113 aa). A disordered region spans residues 147–168; that stretch reads RPVATGHDEQSWAQNRRVELKK.

Belongs to the Pal lipoprotein family. In terms of assembly, the Tol-Pal system is composed of five core proteins: the inner membrane proteins TolA, TolQ and TolR, the periplasmic protein TolB and the outer membrane protein Pal. They form a network linking the inner and outer membranes and the peptidoglycan layer.

It localises to the cell outer membrane. In terms of biological role, part of the Tol-Pal system, which plays a role in outer membrane invagination during cell division and is important for maintaining outer membrane integrity. In Pseudomonas aeruginosa (strain ATCC 15692 / DSM 22644 / CIP 104116 / JCM 14847 / LMG 12228 / 1C / PRS 101 / PAO1), this protein is Peptidoglycan-associated lipoprotein.